The chain runs to 1369 residues: Serine/threonine-protein kinase SIK3 (1369 aa).

Positions 26–55 are disordered; sequence LLPPPAAGPPAAPAAVPPAAVPARPTAPAS. Pro residues predominate over residues 27 to 45; the sequence is LPPPAAGPPAAPAAVPPAA. Residues 46–55 show a composition bias toward low complexity; sequence VPARPTAPAS. Residues 66–317 form the Protein kinase domain; it reads YEIDRTIGKG…MEQICRHKWM (252 aa). At Thr-71 the chain carries Phosphothreonine. Residues 72-80 and Lys-95 each bind ATP; that span reads IGKGNFAVV. Asp-188 serves as the catalytic Proton acceptor. Position 221 is a phosphothreonine (Thr-221). Positions 344–384 constitute a UBA domain; that stretch reads PLNDDVLLAMEDMGLDKERTLQSLRSDAYDHYSAIYSLLCD. The residue at position 469 (Thr-469) is a Phosphothreonine. Residues Ser-551, Ser-591, Ser-592, Ser-674, and Ser-695 each carry the phosphoserine modification. Residues 775–821 form a disordered region; that stretch reads IQPSSPPPNHPSNHLFRQPSNSPPPVSSAMITSHGATSPSQFQGLPS. The span at 803–818 shows a compositional bias: polar residues; sequence AMITSHGATSPSQFQG. Ser-914 carries the post-translational modification Phosphoserine. The segment at 942 to 993 is disordered; it reads LFSDQSRGSPSSYSPSTGVGFPPTQALKVPPLDQFPTFPPSAQQQPPHYTTS. The span at 944-957 shows a compositional bias: low complexity; that stretch reads SDQSRGSPSSYSPS. Residues 981–993 are compositionally biased toward polar residues; sequence PSAQQQPPHYTTS. Ser-1026 carries the phosphoserine modification. An Omega-N-methylarginine modification is found at Arg-1034. Positions 1314–1338 are disordered; that stretch reads DEEDEECGVSLGHEHPGLGDGSQHL.

The protein belongs to the protein kinase superfamily. CAMK Ser/Thr protein kinase family. SNF1 subfamily. As to quaternary structure, binds to and is activated by YWHAZ when phosphorylated on Thr-221. Interacts with 14-3-3 proteins. Interacts with HDAC4; this interaction leads to HDAC4 retention in the cytoplasm. Interacts with DEPTOR, MLST8/GbetaL, RICTOR and RPTOR. Mg(2+) is required as a cofactor. Post-translationally, phosphorylated at Thr-221 by STK11/LKB1 in complex with STE20-related adapter-alpha (STRADA) pseudo kinase and CAB39. Expressed in hypertrophic chondrocytes in the growth plate.

It localises to the cytoplasm. The enzyme catalyses L-seryl-[protein] + ATP = O-phospho-L-seryl-[protein] + ADP + H(+). The catalysed reaction is L-threonyl-[protein] + ATP = O-phospho-L-threonyl-[protein] + ADP + H(+). Its activity is regulated as follows. Activated by phosphorylation on Thr-221. In terms of biological role, positive regulator of mTOR signaling that functions by triggering the degradation of DEPTOR, an mTOR inhibitor. Required for chondrocyte hypertrophy during skeletogenesis. Negatively regulates cAMP signaling pathway possibly by acting on CRTC2/TORC2 and CRTC3/TORC3. Prevents HDAC4 translocation to the nucleus. The protein is Serine/threonine-protein kinase SIK3 (Sik3) of Mus musculus (Mouse).